The following is a 526-amino-acid chain: tRNA-2-methylthio-N(6)-dimethylallyladenosine synthase (526 aa).

One can recognise an MTTase N-terminal domain in the interval Arg14–His130. Positions 23, 59, 93, 167, 171, and 174 each coordinate [4Fe-4S] cluster. Residues Arg153 to Glu401 form the Radical SAM core domain. Residues Gln404–Leu483 enclose the TRAM domain.

This sequence belongs to the methylthiotransferase family. MiaB subfamily. Monomer. Requires [4Fe-4S] cluster as cofactor.

The protein localises to the cytoplasm. The enzyme catalyses N(6)-dimethylallyladenosine(37) in tRNA + (sulfur carrier)-SH + AH2 + 2 S-adenosyl-L-methionine = 2-methylsulfanyl-N(6)-dimethylallyladenosine(37) in tRNA + (sulfur carrier)-H + 5'-deoxyadenosine + L-methionine + A + S-adenosyl-L-homocysteine + 2 H(+). Catalyzes the methylthiolation of N6-(dimethylallyl)adenosine (i(6)A), leading to the formation of 2-methylthio-N6-(dimethylallyl)adenosine (ms(2)i(6)A) at position 37 in tRNAs that read codons beginning with uridine. In Mycobacterium sp. (strain JLS), this protein is tRNA-2-methylthio-N(6)-dimethylallyladenosine synthase.